Here is an 83-residue protein sequence, read N- to C-terminus: Disintegrin bitistatin (83 aa).

One can recognise a Disintegrin domain in the interval 2 to 83 (PPVCGNKILE…GKSSDCPWNH (82 aa)). Disulfide bonds link C5–C24, C5–C34, C16–C29, C16–C34, C18–C24, C18–C29, C28–C51, C42–C48, C47–C72, and C60–C79. The Cell attachment site motif lies at 64-66 (RGD).

The protein belongs to the venom metalloproteinase (M12B) family. P-II subfamily. P-IIa sub-subfamily. In terms of assembly, monomer. Post-translationally, exists in 3 forms in the venom. The forms A, B, and C are present at 53%, 32% and 15%. The forms A and B differ by their disulfide bond pattern in the N-terminal part. No information is known about form C. As to expression, expressed by the venom gland.

It is found in the secreted. Inhibits fibrinogen interaction with platelets. Acts by binding to alpha-IIb/beta-3 (ITGA2B/ITGB3) on the platelet surface and inhibits aggregation induced by ADP, thrombin, platelet-activating factor and collagen. The sequence is that of Disintegrin bitistatin from Bitis arietans (African puff adder).